We begin with the raw amino-acid sequence, 112 residues long: MRREERNMDKLLISFLLSLFMVYFPPSDVVLPSQFEASTDSYVPMSSYPQETQSAKTPSPGSMHPAELIKEYSPLAQSVRQLSVKPLDEPLINRLEKALAVPVKYQSNYLRI.

The segment at 42-64 (YVPMSSYPQETQSAKTPSPGSMH) is disordered. Positions 47–60 (SYPQETQSAKTPSP) are enriched in polar residues.

It localises to the cell membrane. Its function is as follows. Modulates the activity of the potassium/proton antiporter KhtU. Involved in protection of the cell from methylglyoxal, a toxic by-product of glycolysis. The sequence is that of K(+)/H(+) antiporter modulator KhtS from Bacillus subtilis (strain 168).